Here is a 101-residue protein sequence, read N- to C-terminus: Cysteine-rich and transmembrane domain-containing protein B (101 aa).

The interval 1 to 80 (MSQQPPAVGV…PQQQQQQKHS (80 aa)) is disordered. Positions 24–43 (DAYPPPGQPYPQQGYPPPQG) are enriched in pro residues. The span at 59-77 (YPEQGYPQQGYPPQQQQQQ) shows a compositional bias: low complexity. Residues 78–95 (KHSPGMLEGCIAALCCYC) traverse the membrane as a helical segment.

It belongs to the CYSTM1 family.

Its subcellular location is the membrane. The protein is Cysteine-rich and transmembrane domain-containing protein B of Arabidopsis thaliana (Mouse-ear cress).